Reading from the N-terminus, the 235-residue chain is Phosphoribosylaminoimidazole-succinocarboxamide synthase (235 aa).

The protein belongs to the SAICAR synthetase family.

The catalysed reaction is 5-amino-1-(5-phospho-D-ribosyl)imidazole-4-carboxylate + L-aspartate + ATP = (2S)-2-[5-amino-1-(5-phospho-beta-D-ribosyl)imidazole-4-carboxamido]succinate + ADP + phosphate + 2 H(+). Its pathway is purine metabolism; IMP biosynthesis via de novo pathway; 5-amino-1-(5-phospho-D-ribosyl)imidazole-4-carboxamide from 5-amino-1-(5-phospho-D-ribosyl)imidazole-4-carboxylate: step 1/2. The sequence is that of Phosphoribosylaminoimidazole-succinocarboxamide synthase (purC) from Streptococcus pneumoniae serotype 4 (strain ATCC BAA-334 / TIGR4).